A 580-amino-acid polypeptide reads, in one-letter code: tRNA-guanine(15) transglycosylase (580 aa).

Asp91 (nucleophile) is an active-site residue. Positions 126 and 192 each coordinate substrate. Residues Cys275, Cys277, and Cys280 each coordinate Zn(2+). Residues 504–579 form the PUA domain; it reads RMRVVVDEDA…LAVKVRRGVE (76 aa).

It belongs to the archaeosine tRNA-ribosyltransferase family. Zn(2+) serves as cofactor.

It catalyses the reaction guanosine(15) in tRNA + 7-cyano-7-deazaguanine = 7-cyano-7-carbaguanosine(15) in tRNA + guanine. It functions in the pathway tRNA modification; archaeosine-tRNA biosynthesis. Exchanges the guanine residue with 7-cyano-7-deazaguanine (preQ0) at position 15 in the dihydrouridine loop (D-loop) of archaeal tRNAs. This is tRNA-guanine(15) transglycosylase from Thermococcus onnurineus (strain NA1).